The following is a 343-amino-acid chain: F17e-G fimbrial adhesin (343 aa).

A signal peptide spans 1–22 (MTNFYKVFLAVFILVCCNISHA). Residues 23-199 (AVSFIGSTEN…LNPFTLNDTV (177 aa)) form a receptor-binding lectin domain region. Residues 65 to 66 (AN), 110 to 111 (DT), and 138 to 141 (STQG) each bind a carbohydrate. Cysteines 75 and 132 form a disulfide. The fimbrillin-binding domain stretch occupies residues 200-343 (TSCRLLTPSA…GISTFTFSYQ (144 aa)). A disordered region spans residues 287–307 (LKFGPDSPVKGNENQWQLSTG). Residues 298 to 307 (NENQWQLSTG) are compositionally biased toward polar residues.

This sequence belongs to the fimbrial protein family.

It is found in the fimbrium. Essential fimbrial adhesion factor that mediates binding to N-acetylglucosamine-containing receptors in the host intestinal microvilli, leading to colonization of the intestinal tissue, and diarrhea or septicemia. Also confers adhesiveness to laminin and basement membranes. This is F17e-G fimbrial adhesin (f17eG) from Escherichia coli.